The chain runs to 208 residues: Cytochrome c biogenesis ATP-binding export protein CcmA (208 aa).

An ABC transporter domain is found at 3-206; it reads LSGKDLTAYR…LEKFLPPQEK (204 aa). 35–42 is an ATP binding site; the sequence is GPNGIGKS.

It belongs to the ABC transporter superfamily. CcmA exporter (TC 3.A.1.107) family. In terms of assembly, the complex is composed of two ATP-binding proteins (CcmA) and two transmembrane proteins (CcmB).

Its subcellular location is the cell inner membrane. The enzyme catalyses heme b(in) + ATP + H2O = heme b(out) + ADP + phosphate + H(+). Its function is as follows. Part of the ABC transporter complex CcmAB involved in the biogenesis of c-type cytochromes; once thought to export heme, this seems not to be the case, but its exact role is uncertain. Responsible for energy coupling to the transport system. The polypeptide is Cytochrome c biogenesis ATP-binding export protein CcmA (Bartonella henselae (strain ATCC 49882 / DSM 28221 / CCUG 30454 / Houston 1) (Rochalimaea henselae)).